We begin with the raw amino-acid sequence, 324 residues long: Adenine deaminase (324 aa).

His11, His13, and His189 together coordinate Zn(2+). The Proton donor role is filled by Glu192. Asp270 is a Zn(2+) binding site. Position 271 (Asp271) interacts with substrate.

This sequence belongs to the metallo-dependent hydrolases superfamily. Adenosine and AMP deaminases family. Adenine deaminase type 2 subfamily. Zn(2+) is required as a cofactor.

The enzyme catalyses adenine + H2O + H(+) = hypoxanthine + NH4(+). Catalyzes the hydrolytic deamination of adenine to hypoxanthine. Plays an important role in the purine salvage pathway and in nitrogen catabolism. The protein is Adenine deaminase of Sinorhizobium medicae (strain WSM419) (Ensifer medicae).